The chain runs to 337 residues: Anthranilate phosphoribosyltransferase (337 aa).

Residues Gly-78, 81–82 (GD), Thr-86, 88–91 (NIST), 106–114 (KHGNRSVSS), and Ser-118 contribute to the 5-phospho-alpha-D-ribose 1-diphosphate site. Gly-78 is a binding site for anthranilate. Ser-90 is a Mg(2+) binding site. Asn-109 contacts anthranilate. Arg-164 provides a ligand contact to anthranilate. Residues Asp-222 and Glu-223 each contribute to the Mg(2+) site.

It belongs to the anthranilate phosphoribosyltransferase family. Homodimer. Requires Mg(2+) as cofactor.

It carries out the reaction N-(5-phospho-beta-D-ribosyl)anthranilate + diphosphate = 5-phospho-alpha-D-ribose 1-diphosphate + anthranilate. The protein operates within amino-acid biosynthesis; L-tryptophan biosynthesis; L-tryptophan from chorismate: step 2/5. Catalyzes the transfer of the phosphoribosyl group of 5-phosphorylribose-1-pyrophosphate (PRPP) to anthranilate to yield N-(5'-phosphoribosyl)-anthranilate (PRA). The polypeptide is Anthranilate phosphoribosyltransferase (Idiomarina loihiensis (strain ATCC BAA-735 / DSM 15497 / L2-TR)).